Here is a 249-residue protein sequence, read N- to C-terminus: MKSCAILAALGCLAGSVLGHGQVQNFTINGQYNQGFILDYYYQKQNTGHFPNVAGWYAEDLDLGFISPDQYTTPDIVCHKNAAPGAISATAAAGSNIVFQWGPGVWPHPYGPIVTYVVECSGSCTTVNKNNLRWVKIQEAGINYNTQVWAQQDLINQGNKWTVKIPSSLRPGNYVFRHELLAAHGASSANGMQNYPQCVNIAVTGSGTKALPAGTPATQLYKPTDPGILFNPYTTITSYTIPGPALWQG.

The signal sequence occupies residues 1–19; that stretch reads MKSCAILAALGCLAGSVLG. Histidine 20 serves as a coordination point for Cu(2+). N-linked (GlcNAc...) asparagine glycosylation occurs at asparagine 25. Disulfide bonds link cysteine 78–cysteine 198 and cysteine 120–cysteine 124. Residue histidine 108 coordinates Cu(2+). O2-binding residues include histidine 184 and glutamine 193. Residue tyrosine 195 participates in Cu(2+) binding.

Belongs to the polysaccharide monooxygenase AA9 family. Monomer. Cu(2+) serves as cofactor.

The protein resides in the secreted. It carries out the reaction [(1-&gt;4)-beta-D-glucosyl]n+m + reduced acceptor + O2 = 4-dehydro-beta-D-glucosyl-[(1-&gt;4)-beta-D-glucosyl]n-1 + [(1-&gt;4)-beta-D-glucosyl]m + acceptor + H2O.. Lytic polysaccharide monooxygenase (LPMO) that depolymerizes crystalline and amorphous polysaccharides via the oxidation of scissile alpha- or beta-(1-4)-glycosidic bonds, yielding C1 or C4 oxidation products. Catalysis by LPMOs requires the reduction of the active-site copper from Cu(II) to Cu(I) by a reducing agent and H(2)O(2) or O(2) as a cosubstrate. The polypeptide is AA9 family lytic polysaccharide monooxygenase cel61B (Hypocrea jecorina (strain QM6a) (Trichoderma reesei)).